The sequence spans 298 residues: 3-hydroxyisobutyrate dehydrogenase (298 aa).

Residues 2–30 (TDIA…VNVF), 65–66 (LP), and Thr96 contribute to the NAD(+) site. Residue Lys171 is part of the active site. Lys246 lines the NAD(+) pocket.

The protein belongs to the HIBADH-related family.

It catalyses the reaction 3-hydroxy-2-methylpropanoate + NAD(+) = 2-methyl-3-oxopropanoate + NADH + H(+). Its pathway is amino-acid degradation; L-valine degradation. This is 3-hydroxyisobutyrate dehydrogenase from Pseudomonas aeruginosa (strain ATCC 15692 / DSM 22644 / CIP 104116 / JCM 14847 / LMG 12228 / 1C / PRS 101 / PAO1).